Here is an 88-residue protein sequence, read N- to C-terminus: Co-chaperonin GroES (88 aa).

Belongs to the GroES chaperonin family. Heptamer of 7 subunits arranged in a ring. Interacts with the chaperonin GroEL.

It is found in the cytoplasm. In terms of biological role, together with the chaperonin GroEL, plays an essential role in assisting protein folding. The GroEL-GroES system forms a nano-cage that allows encapsulation of the non-native substrate proteins and provides a physical environment optimized to promote and accelerate protein folding. GroES binds to the apical surface of the GroEL ring, thereby capping the opening of the GroEL channel. This Thermodesulfovibrio yellowstonii (strain ATCC 51303 / DSM 11347 / YP87) protein is Co-chaperonin GroES.